The sequence spans 566 residues: E3 ubiquitin-protein ligase RNF220 (566 aa).

Lysine 277 is covalently cross-linked (Glycyl lysine isopeptide (Lys-Gly) (interchain with G-Cter in SUMO2)). Positions lysine 277–histidine 297 are disordered. Serine 390 carries the post-translational modification Phosphoserine. Residues glutamate 485–lysine 513 are a coiled coil. The interval cysteine 514 to serine 522 is required for targeting to the cytoplasm. The segment at cysteine 514–asparagine 553 adopts an RING-type zinc-finger fold.

As to quaternary structure, interacts with SIN3B. Interacts with CTNNB1 (via Armadillo repeats 2-8). Interacts with USP7 (via MATH domain). Auto-ubiquitinated; leads to proteasomal degradation.

It localises to the cytoplasm. The protein localises to the nucleus. It catalyses the reaction S-ubiquitinyl-[E2 ubiquitin-conjugating enzyme]-L-cysteine + [acceptor protein]-L-lysine = [E2 ubiquitin-conjugating enzyme]-L-cysteine + N(6)-ubiquitinyl-[acceptor protein]-L-lysine.. The protein operates within protein modification; protein ubiquitination. In terms of biological role, E3 ubiquitin-protein ligase that promotes the ubiquitination and proteasomal degradation of SIN3B. Independently of its E3 ligase activity, acts as a CTNNB1 stabilizer through USP7-mediated deubiquitination of CTNNB1 and promotes Wnt signaling. Plays a critical role in the regulation of nuclear lamina. This is E3 ubiquitin-protein ligase RNF220 (RNF220) from Macaca fascicularis (Crab-eating macaque).